The sequence spans 380 residues: Probable acyl-CoA dehydrogenase YngJ (380 aa).

FAD-binding positions include 123–132 (FGLTEPNAGS), 156–158 (WIT), Arg-269, and 337–341 (QIHGG). Catalysis depends on Glu-364, which acts as the Proton acceptor. 366-368 (TSE) contacts FAD.

Belongs to the acyl-CoA dehydrogenase family. The cofactor is FAD.

The enzyme catalyses a 2,3-saturated acyl-CoA + A = a 2,3-dehydroacyl-CoA + AH2. The protein is Probable acyl-CoA dehydrogenase YngJ (yngJ) of Bacillus subtilis (strain 168).